We begin with the raw amino-acid sequence, 1029 residues long: Tyrosine-protein kinase-like otk (1029 aa).

The first 18 residues, 1–18 (MISIYGLVMALMMASVLA), serve as a signal peptide directing secretion. Residues 19-577 (SSSRFQRVPQ…GGDGFLVTRA (559 aa)) are Extracellular-facing. Ig-like C2-type domains lie at 21 to 110 (SRFQ…AKLS), 109 to 195 (LSVI…RVMS), 247 to 361 (PEDL…APIS), 364 to 459 (PGIL…VAIN), and 464 to 554 (PKFS…VQLV). Asn35 is a glycosylation site (N-linked (GlcNAc...) asparagine). 4 cysteine pairs are disulfide-bonded: Cys42–Cys91, Cys133–Cys184, Cys272–Cys350, and Cys395–Cys443. 7 N-linked (GlcNAc...) asparagine glycosylation sites follow: Asn332, Asn413, Asn425, Asn440, Asn453, Asn508, and Asn520. The cysteines at positions 486 and 538 are disulfide-linked. Residues 578–598 (VLITMTVALAYIVLVVGLMLW) form a helical membrane-spanning segment. The Cytoplasmic segment spans residues 599–1029 (CRYRRQARKA…LSKAMQSAEK (431 aa)). Disordered stretches follow at residues 613 to 675 (LSTK…KKSA) and 714 to 756 (SPSD…KTSM). Residues 651-669 (KSSGDAQKSDDTACSQQSR) are compositionally biased toward polar residues. Ser674 bears the Phosphoserine mark. Residues 688–1024 (LSELIQIGRG…QLGAALSKAM (337 aa)) form the Protein kinase; inactive domain. The segment covering 716–727 (SDKDADTEKQHS) has biased composition (basic and acidic residues).

It belongs to the protein kinase superfamily. Tyr protein kinase family. Insulin receptor subfamily. Interacts with plexA; component of a receptor complex that mediates the repulsive signaling in response to Semaphorin ligands.

Its subcellular location is the cell membrane. In terms of biological role, acts as a calcium-dependent, homophilic cell adhesion molecule that regulates neural recognition during the development of the nervous system. Component of the repulsive Plexin signaling response to regulate motor axon guidance at the embryonic stage. Also component of a receptor complex that is required in the adult visual system to innervate the lamina layer; specific targeting of R1-R6 axons. In Drosophila simulans (Fruit fly), this protein is Tyrosine-protein kinase-like otk.